We begin with the raw amino-acid sequence, 84 residues long: RNA-binding protein Hfq (84 aa).

A Sm domain is found at 11–71 (DVFLNFIRKN…ISTVMPSTPI (61 aa)).

It belongs to the Hfq family. Homohexamer.

In terms of biological role, RNA chaperone that binds small regulatory RNA (sRNAs) and mRNAs to facilitate mRNA translational regulation in response to envelope stress, environmental stress and changes in metabolite concentrations. Also binds with high specificity to tRNAs. The protein is RNA-binding protein Hfq of Paramagnetospirillum magneticum (strain ATCC 700264 / AMB-1) (Magnetospirillum magneticum).